Here is a 163-residue protein sequence, read N- to C-terminus: Small ribosomal subunit protein bS18c (163 aa).

Disordered regions lie at residues 1–52 (MYIS…IGPG) and 144–163 (NLRN…SSDC). Residues 7–48 (PFRKSKQPFRKSKQTFHKSKQPFRKFKQPFRKSKQPFRRRSR) show a composition bias toward basic residues.

The protein belongs to the bacterial ribosomal protein bS18 family. In terms of assembly, part of the 30S ribosomal subunit.

The protein localises to the plastid. It localises to the chloroplast. The sequence is that of Small ribosomal subunit protein bS18c from Sorghum bicolor (Sorghum).